Consider the following 336-residue polypeptide: Biotin synthase (336 aa).

A Radical SAM core domain is found at 54-281 (QAIQLSTLLS…KSYVRLSAGR (228 aa)). Residues C69, C73, and C76 each coordinate [4Fe-4S] cluster. [2Fe-2S] cluster-binding residues include C113, C144, C204, and R276.

It belongs to the radical SAM superfamily. Biotin synthase family. Homodimer. It depends on [4Fe-4S] cluster as a cofactor. [2Fe-2S] cluster serves as cofactor.

The enzyme catalyses (4R,5S)-dethiobiotin + (sulfur carrier)-SH + 2 reduced [2Fe-2S]-[ferredoxin] + 2 S-adenosyl-L-methionine = (sulfur carrier)-H + biotin + 2 5'-deoxyadenosine + 2 L-methionine + 2 oxidized [2Fe-2S]-[ferredoxin]. Its pathway is cofactor biosynthesis; biotin biosynthesis; biotin from 7,8-diaminononanoate: step 2/2. In terms of biological role, catalyzes the conversion of dethiobiotin (DTB) to biotin by the insertion of a sulfur atom into dethiobiotin via a radical-based mechanism. In Actinobacillus pleuropneumoniae serotype 7 (strain AP76), this protein is Biotin synthase.